The primary structure comprises 86 residues: MKTLLLTLVVVTMVCMDLGYTTICYNHLSRTPETTEICPDSWYFCYKISLADGNDVRIKRGCTFTCPELRPTGKYVYCCRRDKCNQ.

Residues Met1–Thr21 form the signal peptide. Intrachain disulfides connect Cys24-Cys45, Cys38-Cys62, Cys66-Cys78, and Cys79-Cys84.

It belongs to the three-finger toxin family. Short-chain subfamily. Orphan group VIII (haditoxin) sub-subfamily. Homodimer; non-covalently linked. In terms of tissue distribution, expressed by the venom gland.

It is found in the secreted. Functionally, antagonist of muscle and neuronal nicotinic acetylcholine receptors (nAChR) with highest affinity for neuronal alpha-7/CHRNA7 nAChRs. This Naja atra (Chinese cobra) protein is Neurotoxin homolog NL1.